We begin with the raw amino-acid sequence, 957 residues long: Protein translocase subunit SecA (957 aa).

Residues Gln87, Gly105–Thr109, and Asp512 each bind ATP. A disordered region spans residues Ala924–Lys957. Residues Cys943, Cys945, Cys954, and Cys955 each contribute to the Zn(2+) site.

It belongs to the SecA family. In terms of assembly, monomer and homodimer. Part of the essential Sec protein translocation apparatus which comprises SecA, SecYEG and auxiliary proteins SecDF-YajC and YidC. The cofactor is Zn(2+).

Its subcellular location is the cell inner membrane. The protein localises to the cytoplasm. The enzyme catalyses ATP + H2O + cellular proteinSide 1 = ADP + phosphate + cellular proteinSide 2.. Its function is as follows. Part of the Sec protein translocase complex. Interacts with the SecYEG preprotein conducting channel. Has a central role in coupling the hydrolysis of ATP to the transfer of proteins into and across the cell membrane, serving as an ATP-driven molecular motor driving the stepwise translocation of polypeptide chains across the membrane. The sequence is that of Protein translocase subunit SecA from Geobacter sp. (strain M21).